A 202-amino-acid polypeptide reads, in one-letter code: dITP/XTP pyrophosphatase (202 aa).

7–12 (TTNEGK) lines the substrate pocket. Residues Glu-37 and Asp-66 each contribute to the Mg(2+) site. The Proton acceptor role is filled by Asp-66. Residues Ser-67, 155–158 (FGYD), Lys-178, and 183–184 (HR) each bind substrate.

It belongs to the HAM1 NTPase family. In terms of assembly, homodimer. Requires Mg(2+) as cofactor.

The enzyme catalyses XTP + H2O = XMP + diphosphate + H(+). It carries out the reaction dITP + H2O = dIMP + diphosphate + H(+). The catalysed reaction is ITP + H2O = IMP + diphosphate + H(+). Pyrophosphatase that catalyzes the hydrolysis of nucleoside triphosphates to their monophosphate derivatives, with a high preference for the non-canonical purine nucleotides XTP (xanthosine triphosphate), dITP (deoxyinosine triphosphate) and ITP. Seems to function as a house-cleaning enzyme that removes non-canonical purine nucleotides from the nucleotide pool, thus preventing their incorporation into DNA/RNA and avoiding chromosomal lesions. The chain is dITP/XTP pyrophosphatase from Aquifex aeolicus (strain VF5).